We begin with the raw amino-acid sequence, 164 residues long: UPF0304 protein NT01EI_2691 (164 aa).

Belongs to the UPF0304 family.

The polypeptide is UPF0304 protein NT01EI_2691 (Edwardsiella ictaluri (strain 93-146)).